Consider the following 610-residue polypeptide: Serine/threonine-protein kinase RCK2 (610 aa).

2 disordered regions span residues 1-55 (MLKI…QDKN) and 99-127 (TSVP…SLSE). A compositionally biased stretch (basic and acidic residues) spans 11-24 (KKPDQADLSQESKK). A compositionally biased stretch (polar residues) spans 31 to 55 (RSSGTNNKDVSQITSSPKKSFQDKN). 2 positions are modified to phosphoserine: serine 46 and serine 50. Residues 163–478 (YKLINKIGEG…IDQFLDDPWL (316 aa)) form the Protein kinase domain. 169-177 (IGEGAFSKV) serves as a coordination point for ATP. Serine 187 is modified (phosphoserine). Lysine 201 serves as a coordination point for ATP. Aspartate 313 (proton acceptor) is an active-site residue. Residue threonine 350 is modified to Phosphothreonine. Residues 493–506 (KKAGTSERRHPHKK) form a calmodulin-binding region. At serine 520 the chain carries Phosphoserine. The segment at 541-564 (EDRMGTRGGLGSLAEDEELEDSYS) is disordered.

It belongs to the protein kinase superfamily. CAMK Ser/Thr protein kinase family. CaMK subfamily. Post-translationally, autophosphorylated. Phosphorylated by HOG1 at Ser-520 after osmotic stress.

Its subcellular location is the cytoplasm. The catalysed reaction is L-seryl-[protein] + ATP = O-phospho-L-seryl-[protein] + ADP + H(+). The enzyme catalyses L-threonyl-[protein] + ATP = O-phospho-L-threonyl-[protein] + ADP + H(+). Activated by Ser-520 phosphorylation by HOG1. Serine/threonine-protein kinase involved in a signal transduction pathway that is activated by changes in the osmolarity of the extracellular environment. The chain is Serine/threonine-protein kinase RCK2 (RCK2) from Saccharomyces cerevisiae (strain ATCC 204508 / S288c) (Baker's yeast).